The primary structure comprises 430 residues: Probable folylpolyglutamate synthase (430 aa).

An ATP-binding site is contributed by 37-40 (GKET). Residue glutamate 132 coordinates Mg(2+). Aspartate 300 provides a ligand contact to ATP.

It belongs to the folylpolyglutamate synthase family.

Its subcellular location is the mitochondrion. The enzyme catalyses (6S)-5,6,7,8-tetrahydrofolyl-(gamma-L-Glu)(n) + L-glutamate + ATP = (6S)-5,6,7,8-tetrahydrofolyl-(gamma-L-Glu)(n+1) + ADP + phosphate + H(+). It participates in cofactor biosynthesis; tetrahydrofolylpolyglutamate biosynthesis. Conversion of folates to polyglutamate derivatives. The chain is Probable folylpolyglutamate synthase (RMA1) from Saccharomyces cerevisiae (strain ATCC 204508 / S288c) (Baker's yeast).